The sequence spans 248 residues: Transmembrane protein 182 (248 aa).

The signal sequence occupies residues 1-26 (MKIHVAGFFAGLFGALATLFILLSFG). Over 27–136 (TDYWLLASET…IIYRGFWSVS (110 aa)) the chain is Extracellular. N-linked (GlcNAc...) asparagine glycans are attached at residues asparagine 66 and asparagine 119. The helical transmembrane segment at 137-157 (MLVGVAAVVAGGFIIICAAPF) threads the bilayer. The Cytoplasmic portion of the chain corresponds to 158–167 (ASHRLYKAGG). The chain crosses the membrane as a helical span at residues 168–188 (GLYLISGFFVLVVTAMYVIWI). Over 189–218 (DVLDVISLYTEYQKLNKCADFELNKTYGLS) the chain is Extracellular. Asparagine 212 is a glycosylation site (N-linked (GlcNAc...) asparagine). Residues 219–239 (FMFAPVGVFFCFLSGLLFLVI) form a helical membrane-spanning segment. Over 240 to 248 (GRTVHHQYN) the chain is Cytoplasmic.

This sequence belongs to the TMEM182 family.

The protein localises to the cell membrane. May negatively regulate myogenesis and skeletal muscle regeneration. This is Transmembrane protein 182 (tmem182a) from Danio rerio (Zebrafish).